The chain runs to 60 residues: Metallothionein B (60 aa).

Residues 1 to 28 are beta; the sequence is MDPCECSKTGSCNCGGSCKCSNCACTSC. Positions 4, 6, 12, 14, 18, 20, 23, 25, 28, 32, 33, 35, 36, 40, 43, 47, 49, 54, 58, and 59 each coordinate a divalent metal cation. An alpha region spans residues 29-60; that stretch reads KKSCCPCCPSDCSKCASGCVCKGKTCDTSCCQ.

The protein belongs to the metallothionein superfamily. Type 1 family.

Metallothioneins have a high content of cysteine residues that bind various heavy metals. This chain is Metallothionein B (mtb), found in Oncorhynchus mykiss (Rainbow trout).